Reading from the N-terminus, the 604-residue chain is Sulfite reductase [NADPH] flavoprotein alpha-component (604 aa).

Positions Val-66–Ala-204 constitute a Flavodoxin-like domain. FMN-binding positions include Ser-72 to Ala-77, Ser-119 to Gly-122, and Leu-155 to Cys-164. One can recognise an FAD-binding FR-type domain in the interval Ala-239–Pro-453. Residues Thr-327, Gln-361, Arg-391–Ser-394, Thr-409–Gly-411, and Gly-424–Ser-427 contribute to the FAD site. NADP(+)-binding positions include Ser-524 to Arg-525, Lys-530 to Gln-534, and Asp-566. Tyr-604 serves as a coordination point for FAD.

Belongs to the NADPH-dependent sulphite reductase flavoprotein subunit CysJ family. This sequence in the N-terminal section; belongs to the flavodoxin family. It in the C-terminal section; belongs to the flavoprotein pyridine nucleotide cytochrome reductase family. In terms of assembly, alpha(8)-beta(8). The alpha component is a flavoprotein, the beta component is a hemoprotein. It depends on FAD as a cofactor. FMN serves as cofactor.

The enzyme catalyses hydrogen sulfide + 3 NADP(+) + 3 H2O = sulfite + 3 NADPH + 4 H(+). It functions in the pathway sulfur metabolism; hydrogen sulfide biosynthesis; hydrogen sulfide from sulfite (NADPH route): step 1/1. Its function is as follows. Component of the sulfite reductase complex that catalyzes the 6-electron reduction of sulfite to sulfide. This is one of several activities required for the biosynthesis of L-cysteine from sulfate. The flavoprotein component catalyzes the electron flow from NADPH -&gt; FAD -&gt; FMN to the hemoprotein component. This Neisseria meningitidis serogroup C (strain 053442) protein is Sulfite reductase [NADPH] flavoprotein alpha-component.